Consider the following 298-residue polypeptide: Protein ILRUN (298 aa).

The interval 199 to 277 is disordered; the sequence is NTQPHRKVEG…SVNLSPSSHA (79 aa). Residues Ser-215 and Ser-222 each carry the phosphoserine modification. Over residues 242 to 255 the composition is skewed to low complexity; sequence TWAPAPDTWAPAPD. The span at 262-277 shows a compositional bias: polar residues; it reads NRLSQNSVNLSPSSHA. Phosphoserine is present on Ser-272.

As to quaternary structure, interacts with IRF3; the interaction inhibits IRF3 binding to its DNA consensus sequence. As to expression, expressed in lung (at protein level).

It is found in the cytoplasm. The protein resides in the nucleus. Negative regulator of innate antiviral response. Blocks IRF3-dependent cytokine production such as IFNA, IFNB and TNF. Interacts with IRF3 and inhibits IRF3 recruitment to type I IFN promoter sequences while also reducing nuclear levels of the coactivators EP300 and CREBBP. This chain is Protein ILRUN, found in Homo sapiens (Human).